The following is a 278-amino-acid chain: Phosphonates import ATP-binding protein PhnC 1 (278 aa).

Residues 5 to 253 (IRVDSLNKTF…FLNELYGAEG (249 aa)) form the ABC transporter domain. 37–44 (GASGSGKS) is a binding site for ATP.

It belongs to the ABC transporter superfamily. Phosphonates importer (TC 3.A.1.9.1) family. In terms of assembly, the complex is composed of two ATP-binding proteins (PhnC), two transmembrane proteins (PhnE) and a solute-binding protein (PhnD).

Its subcellular location is the cell inner membrane. The catalysed reaction is phosphonate(out) + ATP + H2O = phosphonate(in) + ADP + phosphate + H(+). In terms of biological role, part of the ABC transporter complex PhnCDE involved in phosphonates import. Responsible for energy coupling to the transport system. This chain is Phosphonates import ATP-binding protein PhnC 1, found in Pseudomonas aeruginosa (strain UCBPP-PA14).